Reading from the N-terminus, the 327-residue chain is Nucleotide-binding protein CYB_0992 (327 aa).

12-19 (GLTGAGKT) is an ATP binding site.

Belongs to the RapZ-like family.

Functionally, displays ATPase and GTPase activities. This is Nucleotide-binding protein CYB_0992 from Synechococcus sp. (strain JA-2-3B'a(2-13)) (Cyanobacteria bacterium Yellowstone B-Prime).